The primary structure comprises 339 residues: Large ribosomal subunit protein uL29 (339 aa).

A large ribosomal subunit protein uL29 region spans residues M1–E96. The tract at residues Q97–K339 is unknown. 2 disordered regions span residues V129–K254 and K311–K339. A compositionally biased stretch (low complexity) spans A145–K156. Residues D157–A170 show a composition bias toward basic and acidic residues. Residues T171–A182 are compositionally biased toward low complexity. The span at A185–A210 shows a compositional bias: basic and acidic residues. Over residues K217–K238 the composition is skewed to low complexity. The span at A239–S248 shows a compositional bias: basic and acidic residues.

Belongs to the universal ribosomal protein uL29 family. Forms homomultimers. Part of the ribosome; radioactive IRS binds to purified ribosomes.

Specifically binds a DNA inverted repeat sequence (IRS) found downstream of rpsB in one of the ribosomal subunit operons (for genes rpsB, tsf, and unknown gene x). Might be involved in regulation of transcription of the rpsB operon; the IRS may be a control element to attenuate transcription. This is Large ribosomal subunit protein uL29 from Spiroplasma citri.